The following is a 355-amino-acid chain: D-alanine--D-alanine ligase (355 aa).

Residues 143–350 (KTIFSNHKLP…IEQLVAKLVD (208 aa)) form the ATP-grasp domain. 178-233 (LKKLKFPVFVKPSNSGSSLGISKVKNESEILLALEKAWGIDPRILIEEGLEVREIE) lines the ATP pocket. Mg(2+)-binding residues include Asp303, Glu317, and Asn319.

The protein belongs to the D-alanine--D-alanine ligase family. Mg(2+) serves as cofactor. Requires Mn(2+) as cofactor.

Its subcellular location is the cytoplasm. The enzyme catalyses 2 D-alanine + ATP = D-alanyl-D-alanine + ADP + phosphate + H(+). The protein operates within cell wall biogenesis; peptidoglycan biosynthesis. Cell wall formation. This chain is D-alanine--D-alanine ligase, found in Prochlorococcus marinus (strain MIT 9301).